The primary structure comprises 178 residues: Nucleoplasmin-3 (178 aa).

Residue A2 is modified to N-acetylalanine. 2 positions are modified to phosphoserine: S13 and S16. R27 is modified (omega-N-methylarginine). Residues 141–178 (TMSNDVSEEESEEEEEDSDEEEVELCPILPAKKQGGRP) form a disordered region. Positions 146 to 164 (VSEEESEEEEEDSDEEEVE) are enriched in acidic residues. 3 positions are modified to phosphoserine: S147, S151, and S158.

It belongs to the nucleoplasmin family. As to quaternary structure, interacts with NPM (via N-terminus). Forms a pentamer with NPM at a ratio 4:1 (NPM3/NPM). Two pentamers form a decamer. Post-translationally, phosphorylated. As to expression, ubiquitous.

It localises to the nucleus. The protein resides in the nucleolus. Functionally, plays a role in the regulation of diverse cellular processes such as ribosome biogenesis, chromatin remodeling or protein chaperoning. Modulates the histone chaperone function and the RNA-binding activity of nucleolar phosphoprotein B23/NPM. Efficiently mediates chromatin remodeling when included in a pentamer containing NPM3 and NPM. The polypeptide is Nucleoplasmin-3 (NPM3) (Homo sapiens (Human)).